A 1061-amino-acid chain; its full sequence is Transcription termination factor 2 (1061 aa).

Disordered regions lie at residues 1 to 163 and 212 to 253; these read MSSE…TAEA and ILSS…VKTS. Positions 32 to 46 are enriched in low complexity; sequence LSKSSRLSKSSRPSS. Phosphoserine occurs at positions 108 and 110. The span at 138-152 shows a compositional bias: acidic residues; the sequence is LSDDDSEIEYSDEVQ. A phosphoserine mark is found at Ser214 and Ser215. Position 216 is a phosphothreonine (Thr216). A compositionally biased stretch (polar residues) spans 237 to 253; sequence KSLSPRSSAGASVVKTS. Residues 452–652 form the Helicase ATP-binding domain; sequence WRERKLPRGG…YALLKFLRCS (201 aa). An ATP-binding site is contributed by 465–472; the sequence is DDMGLGKT. Positions 485–523 are disordered; that stretch reads GQEMSEGKDESSDSDSEDDKNKKRKSVTGWKSKGRKDTR. A compositionally biased stretch (basic residues) spans 506–522; sequence KKRKSVTGWKSKGRKDT. Residues 603–606 carry the DEAH box motif; that stretch reads DEAH. Residues 891–1056 form the Helicase C-terminal domain; the sequence is KINMVIQILK…SSKLTIDDLK (166 aa).

Belongs to the SNF2/RAD54 helicase family.

The protein localises to the nucleus. In terms of biological role, dsDNA-dependent ATPase which acts as a transcription termination factor by coupling ATP hydrolysis with removal of RNA polymerase II from the DNA template. This Drosophila melanogaster (Fruit fly) protein is Transcription termination factor 2 (lds).